We begin with the raw amino-acid sequence, 209 residues long: Guanylate kinase (209 aa).

A Guanylate kinase-like domain is found at Gly-9 to Thr-188. An ATP-binding site is contributed by Ser-16 to Thr-23.

This sequence belongs to the guanylate kinase family.

It is found in the cytoplasm. It carries out the reaction GMP + ATP = GDP + ADP. Functionally, essential for recycling GMP and indirectly, cGMP. In Ehrlichia chaffeensis (strain ATCC CRL-10679 / Arkansas), this protein is Guanylate kinase.